A 765-amino-acid chain; its full sequence is Periplasmic beta-glucosidase (765 aa).

The N-terminal stretch at 1-20 is a signal peptide; that stretch reads MKWLCSVGVAVSLAMQPALA. Asp287 is a catalytic residue.

The protein belongs to the glycosyl hydrolase 3 family.

The protein localises to the periplasm. The enzyme catalyses Hydrolysis of terminal, non-reducing beta-D-glucosyl residues with release of beta-D-glucose.. In Salmonella typhimurium (strain LT2 / SGSC1412 / ATCC 700720), this protein is Periplasmic beta-glucosidase (bglX).